Reading from the N-terminus, the 109-residue chain is Large ribosomal subunit protein uL24 (109 aa).

Belongs to the universal ribosomal protein uL24 family. In terms of assembly, part of the 50S ribosomal subunit.

In terms of biological role, one of two assembly initiator proteins, it binds directly to the 5'-end of the 23S rRNA, where it nucleates assembly of the 50S subunit. One of the proteins that surrounds the polypeptide exit tunnel on the outside of the subunit. This chain is Large ribosomal subunit protein uL24, found in Rickettsia akari (strain Hartford).